A 113-amino-acid polypeptide reads, in one-letter code: Beta-defensin 112 (113 aa).

3 disulfide bridges follow: Cys-54–Cys-82, Cys-61–Cys-75, and Cys-65–Cys-83.

This sequence belongs to the beta-defensin family.

The protein resides in the secreted. Has antibacterial activity. This Homo sapiens (Human) protein is Beta-defensin 112 (DEFB112).